Here is a 148-residue protein sequence, read N- to C-terminus: FAD synthase (148 aa).

ATP-binding positions include 14–15 (VF), 19–22 (HVGH), and Asp-100.

The protein belongs to the archaeal FAD synthase family. Homodimer. A divalent metal cation is required as a cofactor.

It carries out the reaction FMN + ATP + H(+) = FAD + diphosphate. The protein operates within cofactor biosynthesis; FAD biosynthesis; FAD from FMN: step 1/1. In terms of biological role, catalyzes the transfer of the AMP portion of ATP to flavin mononucleotide (FMN) to produce flavin adenine dinucleotide (FAD) coenzyme. This Pyrococcus abyssi (strain GE5 / Orsay) protein is FAD synthase.